The following is a 284-amino-acid chain: Tropomyosin (284 aa).

Methionine 1 bears the N-acetylmethionine mark. The disordered stretch occupies residues 1 to 42; sequence MDAIKKKMQAMKLEKDNAMDRADTLEQQNKEANNRAEKSEEE. The stretch at 1–284 forms a coiled coil; the sequence is MDAIKKKMQA…DQTFSELSGY (284 aa). The segment covering 12–38 has biased composition (basic and acidic residues); the sequence is KLEKDNAMDRADTLEQQNKEANNRAEK.

The protein belongs to the tropomyosin family. Homodimer.

In terms of biological role, tropomyosin, in association with the troponin complex, plays a central role in the calcium dependent regulation of muscle contraction. The sequence is that of Tropomyosin from Pandalus borealis (Northern red shrimp).